The chain runs to 374 residues: GDSL esterase/lipase At3g50400 (374 aa).

The signal sequence occupies residues methionine 1–alanine 26. The active-site Nucleophile is the serine 41. N-linked (GlcNAc...) asparagine glycosylation is found at asparagine 104 and asparagine 125. Active-site residues include aspartate 339 and histidine 342.

It belongs to the 'GDSL' lipolytic enzyme family.

It localises to the secreted. In Arabidopsis thaliana (Mouse-ear cress), this protein is GDSL esterase/lipase At3g50400.